The primary structure comprises 83 residues: Cytochrome b559 subunit alpha (83 aa).

Residues 21 to 35 (VIHSITIPSLFIAGW) traverse the membrane as a helical segment. Histidine 23 is a heme binding site.

Belongs to the PsbE/PsbF family. As to quaternary structure, heterodimer of an alpha subunit and a beta subunit. PSII is composed of 1 copy each of membrane proteins PsbA, PsbB, PsbC, PsbD, PsbE, PsbF, PsbH, PsbI, PsbJ, PsbK, PsbL, PsbM, PsbT, PsbX, PsbY, PsbZ, Psb30/Ycf12, at least 3 peripheral proteins of the oxygen-evolving complex and a large number of cofactors. It forms dimeric complexes. Requires heme b as cofactor.

It localises to the plastid. The protein resides in the chloroplast thylakoid membrane. Functionally, this b-type cytochrome is tightly associated with the reaction center of photosystem II (PSII). PSII is a light-driven water:plastoquinone oxidoreductase that uses light energy to abstract electrons from H(2)O, generating O(2) and a proton gradient subsequently used for ATP formation. It consists of a core antenna complex that captures photons, and an electron transfer chain that converts photonic excitation into a charge separation. This Staurastrum punctulatum (Green alga) protein is Cytochrome b559 subunit alpha.